A 248-amino-acid polypeptide reads, in one-letter code: 3-deoxy-manno-octulosonate cytidylyltransferase (248 aa).

This sequence belongs to the KdsB family.

The protein resides in the cytoplasm. The catalysed reaction is 3-deoxy-alpha-D-manno-oct-2-ulosonate + CTP = CMP-3-deoxy-beta-D-manno-octulosonate + diphosphate. It participates in nucleotide-sugar biosynthesis; CMP-3-deoxy-D-manno-octulosonate biosynthesis; CMP-3-deoxy-D-manno-octulosonate from 3-deoxy-D-manno-octulosonate and CTP: step 1/1. The protein operates within bacterial outer membrane biogenesis; lipopolysaccharide biosynthesis. In terms of biological role, activates KDO (a required 8-carbon sugar) for incorporation into bacterial lipopolysaccharide in Gram-negative bacteria. In Christiangramia forsetii (strain DSM 17595 / CGMCC 1.15422 / KT0803) (Gramella forsetii), this protein is 3-deoxy-manno-octulosonate cytidylyltransferase.